The sequence spans 286 residues: Shikimate dehydrogenase (NADP(+)) (286 aa).

Residues 20–22 (SLS) and T67 each bind shikimate. The Proton acceptor role is filled by K71. The shikimate site is built by N92 and D107. Residues 132-136 (GAGGA) and M228 each bind NADP(+). Y230 contacts shikimate. G251 is a binding site for NADP(+).

Belongs to the shikimate dehydrogenase family. In terms of assembly, homodimer.

It catalyses the reaction shikimate + NADP(+) = 3-dehydroshikimate + NADPH + H(+). The protein operates within metabolic intermediate biosynthesis; chorismate biosynthesis; chorismate from D-erythrose 4-phosphate and phosphoenolpyruvate: step 4/7. In terms of biological role, involved in the biosynthesis of the chorismate, which leads to the biosynthesis of aromatic amino acids. Catalyzes the reversible NADPH linked reduction of 3-dehydroshikimate (DHSA) to yield shikimate (SA). In Geobacter sulfurreducens (strain ATCC 51573 / DSM 12127 / PCA), this protein is Shikimate dehydrogenase (NADP(+)).